Consider the following 290-residue polypeptide: Small ribosomal subunit biogenesis GTPase RsgA (290 aa).

The CP-type G domain maps to 62–213 (KNSLVRPPIV…IADTPGFSSL (152 aa)). Residues 111 to 114 (SKLD) and 156 to 164 (GQTGVGKST) each bind GTP. Residues C237, C242, H244, and C250 each coordinate Zn(2+).

This sequence belongs to the TRAFAC class YlqF/YawG GTPase family. RsgA subfamily. Monomer. Associates with 30S ribosomal subunit, binds 16S rRNA. It depends on Zn(2+) as a cofactor.

The protein localises to the cytoplasm. Functionally, one of several proteins that assist in the late maturation steps of the functional core of the 30S ribosomal subunit. Helps release RbfA from mature subunits. May play a role in the assembly of ribosomal proteins into the subunit. Circularly permuted GTPase that catalyzes slow GTP hydrolysis, GTPase activity is stimulated by the 30S ribosomal subunit. The chain is Small ribosomal subunit biogenesis GTPase RsgA from Streptococcus agalactiae serotype III (strain NEM316).